The sequence spans 178 residues: Large ribosomal subunit protein uL5 (178 aa).

The protein belongs to the universal ribosomal protein uL5 family. As to quaternary structure, part of the 50S ribosomal subunit; part of the 5S rRNA/L5/L18/L25 subcomplex. Contacts the 5S rRNA and the P site tRNA. Forms a bridge to the 30S subunit in the 70S ribosome.

Its function is as follows. This is one of the proteins that bind and probably mediate the attachment of the 5S RNA into the large ribosomal subunit, where it forms part of the central protuberance. In the 70S ribosome it contacts protein S13 of the 30S subunit (bridge B1b), connecting the 2 subunits; this bridge is implicated in subunit movement. Contacts the P site tRNA; the 5S rRNA and some of its associated proteins might help stabilize positioning of ribosome-bound tRNAs. This Psychrobacter arcticus (strain DSM 17307 / VKM B-2377 / 273-4) protein is Large ribosomal subunit protein uL5.